The sequence spans 2248 residues: Zinc finger protein 407 (2248 aa).

A compositionally biased stretch (basic and acidic residues) spans 1–32 (MMDSENKPENDEDEKINKEAQDLTKLSSHNED). Residues 1–84 (MMDSENKPEN…RRKLDEAEPL (84 aa)) form a disordered region. 3 consecutive C2H2-type zinc fingers follow at residues 186–208 (LKCS…AESH), 215–238 (HTCC…KQAH), and 244–268 (FSCD…GKTH). Disordered regions lie at residues 291-322 (KKSR…GLRN) and 494-515 (SETQ…GLHS). Residues 494–504 (SETQEAEQGQG) are compositionally biased toward polar residues. 3 consecutive C2H2-type zinc fingers follow at residues 528 to 551 (CACT…KRCH), 557 to 581 (FYCR…SNQH), and 615 to 639 (FLCT…TEKH). Residues 667–700 (ESENAKESMDDSGKASQEEPLKSRVSHGNEVRHS) are disordered. A compositionally biased stretch (basic and acidic residues) spans 669–699 (ENAKESMDDSGKASQEEPLKSRVSHGNEVRH). The C2H2-type 7 zinc finger occupies 705-728 (FQCKKCFYKTRSSTVLTRHIKLRH). The interval 821-847 (LSQSGGSTKDDELASTTTPKRGRPKGN) is disordered. 2 consecutive C2H2-type zinc fingers follow at residues 850–873 (RTCS…RRKH) and 879–903 (YLCK…TKKH). A disordered region spans residues 910–962 (EASGKHSSDIIVGPEGGSLEAGKKNAGSAVTMSDEHANKPAESPTSVLEKPDR). C2H2-type zinc fingers lie at residues 1017 to 1040 (NKCL…KRKH) and 1046 to 1070 (FYCM…TEKH). At serine 1262 the chain carries Phosphoserine. 2 C2H2-type zinc fingers span residues 1444 to 1468 (FHCL…SAGH) and 1486 to 1509 (FKCV…KGQH). The C2H2-type 14; degenerate zinc finger occupies 1537–1561 (NVCKYCGKMCRSSNSMAFLAHIRTH). 8 C2H2-type zinc fingers span residues 1567–1589 (FKCK…VKRH), 1595–1618 (YKCH…LGKH), 1628–1650 (FTCH…MKLH), 1656–1680 (FKCT…YRTH), 1686–1708 (FLCD…RRQH), 1714–1736 (FKCD…KRVH), 1742–1767 (YRCP…TGKH), and 1773–1796 (YNCP…KEQH).

The protein localises to the nucleus. May be involved in transcriptional regulation. The chain is Zinc finger protein 407 (ZNF407) from Homo sapiens (Human).